Here is a 394-residue protein sequence, read N- to C-terminus: NAD(P)H-quinone oxidoreductase subunit H (394 aa).

The protein belongs to the complex I 49 kDa subunit family. NDH-1 can be composed of about 15 different subunits; different subcomplexes with different compositions have been identified which probably have different functions.

Its subcellular location is the cellular thylakoid membrane. It catalyses the reaction a plastoquinone + NADH + (n+1) H(+)(in) = a plastoquinol + NAD(+) + n H(+)(out). The catalysed reaction is a plastoquinone + NADPH + (n+1) H(+)(in) = a plastoquinol + NADP(+) + n H(+)(out). NDH-1 shuttles electrons from an unknown electron donor, via FMN and iron-sulfur (Fe-S) centers, to quinones in the respiratory and/or the photosynthetic chain. The immediate electron acceptor for the enzyme in this species is believed to be plastoquinone. Couples the redox reaction to proton translocation, and thus conserves the redox energy in a proton gradient. Cyanobacterial NDH-1 also plays a role in inorganic carbon-concentration. This Trichodesmium erythraeum (strain IMS101) protein is NAD(P)H-quinone oxidoreductase subunit H.